The primary structure comprises 117 residues: Ig heavy chain V region G4 (117 aa).

An N-terminal signal peptide occupies residues 1 to 19; that stretch reads MTHWLCFTLALVAVRGVLS. Positions 20–49 are framework-1; the sequence is EIQLVESGGAIRKPGDSLRLSCKASGFTFS. C41 and C115 are joined by a disulfide. Residues 50–54 are complementarity-determining-1; it reads DTWMA. Residues 55 to 68 are framework-2; sequence WARQPPGKGLQWVG. A complementarity-determining-2 region spans residues 69 to 85; sequence EINGNSETIRYAPEVKG. Residues 86–117 are framework-3; the sequence is RLTISRDNTQNLLFLQISSLKPEDTATYYCAR.

The sequence is that of Ig heavy chain V region G4 (G4) from Caiman crocodilus (Spectacled caiman).